Consider the following 78-residue polypeptide: Toxin BmTxKS4 (78 aa).

The N-terminal stretch at 1–21 (MKLKISFLILVLFSVFFAIEG) is a signal peptide. Positions 22–32 (IIKWFPASVNG) are excised as a propeptide.

Contains 3 disulfide bonds. Expressed by the venom gland.

The protein resides in the secreted. Its function is as follows. Reversibly inhibits potassium channels. This Olivierus martensii (Manchurian scorpion) protein is Toxin BmTxKS4.